The primary structure comprises 262 residues: Small ribosomal subunit protein eS1 (262 aa).

The protein belongs to the eukaryotic ribosomal protein eS1 family. Component of the small ribosomal subunit. Mature ribosomes consist of a small (40S) and a large (60S) subunit. The 40S subunit contains about 33 different proteins and 1 molecule of RNA (18S). The 60S subunit contains about 49 different proteins and 3 molecules of RNA (25S, 5.8S and 5S).

The protein localises to the cytoplasm. This is Small ribosomal subunit protein eS1 from Brassica campestris (Field mustard).